The sequence spans 474 residues: Nitric oxide reductase subunit B (474 aa).

Residues 19 to 39 (YFVFALILFVGQVLFGLIMGL) traverse the membrane as a helical segment. H60 serves as a coordination point for heme b. A run of 8 helical transmembrane segments spans residues 61-81 (TNLLIVWLLFGFMGAAYYLIP), 95-115 (IILFWVFAAAGVLTILGYLFV), 145-165 (IGIVVVALGFLYNIGMTMLKG), 169-189 (VVSTVMMTGLIGLAVFFLFAF), 207-227 (HLWVEGVWELIMGAMLAFVLI), 243-263 (VIIAMALITGIIGTGHHFFWI), 270-290 (LWVGSIFSALEPLPFFAMVLF), and 308-328 (SLWAIGTTVTAFLGAGVWGFM). Fe cation contacts are provided by H207, H258, and H259. H347 and H349 together coordinate heme b. Helical transmembrane passes span 348–368 (GHLAFYGAYAMIVMTMISYAM), 390–410 (FWLMTISMIAITLFLTAAGVV), and 433–453 (LAIFFWLRFIAGVFFLIGLVC).

The protein belongs to the heme-copper respiratory oxidase family. In terms of assembly, heterodimer of cytochromes b (large subunit) and c (small subunit).

The protein localises to the cell membrane. It carries out the reaction nitrous oxide + 2 Fe(III)-[cytochrome c] + H2O = 2 nitric oxide + 2 Fe(II)-[cytochrome c] + 2 H(+). The protein operates within nitrogen metabolism; nitrate reduction (denitrification); dinitrogen from nitrate: step 3/4. Functionally, component of the anaerobic respiratory chain that transforms nitrate to dinitrogen (denitrification). NorB is the catalytic subunit of the enzyme complex. Shows proton pump activity across the membrane in denitrifying bacterial cells. The mononitrogen reduction is probably coupled to electron transport phosphorylation. The chain is Nitric oxide reductase subunit B (norB) from Stutzerimonas stutzeri (Pseudomonas stutzeri).